Consider the following 53-residue polypeptide: UPF0391 membrane protein TM1040_2720 (53 aa).

A run of 2 helical transmembrane segments spans residues 4 to 24 (WALA…GGIA) and 29 to 48 (GIAQ…ALIL).

This sequence belongs to the UPF0391 family.

It localises to the cell membrane. The polypeptide is UPF0391 membrane protein TM1040_2720 (Ruegeria sp. (strain TM1040) (Silicibacter sp.)).